We begin with the raw amino-acid sequence, 375 residues long: L-asparaginase 2 (375 aa).

Residues 1 to 19 (MKKQRMLVLFTALLFVFTG) form the signal peptide. Positions 22 to 46 (HSPETKESPKEKAQTQKVSSASASE) are disordered. The segment covering 24–35 (PETKESPKEKAQ) has biased composition (basic and acidic residues). The Asparaginase/glutaminase domain maps to 51 to 375 (PNIRILATGG…QKIQAYFNEY (325 aa)). Thr-61 serves as the catalytic O-isoaspartyl threonine intermediate. Substrate contacts are provided by residues Ser-108 and 141 to 142 (TD).

Belongs to the asparaginase 1 family. In terms of assembly, homotetramer.

The enzyme catalyses L-asparagine + H2O = L-aspartate + NH4(+). Its function is as follows. Catalyzes the conversion of L-asparagine to L-aspartate and ammonium. The sequence is that of L-asparaginase 2 (ansZ) from Bacillus subtilis (strain 168).